The chain runs to 380 residues: Apelin receptor (380 aa).

Over 1-30 (MEEGGDFDNYYGADNQSECEYTDWKSSGAL) the chain is Extracellular. N15 carries N-linked (GlcNAc...) asparagine glycosylation. 2 disulfides stabilise this stretch: C19–C281 and C102–C181. Residues 31–54 (IPAIYMLVFLLGTTGNGLVLWTVF) traverse the membrane as a helical segment. The Cytoplasmic portion of the chain corresponds to 55–64 (RSSREKRRSA). A helical transmembrane segment spans residues 65–86 (DIFIASLAVADLTFVVTLPLWA). The Extracellular segment spans residues 87 to 99 (TYTYRDYDWPFGT). A helical membrane pass occupies residues 100–125 (FFCKLSSYLIFVNMYASVFCLTGLSF). At 126–146 (DRYLAIVRPVANARLRLRVSG) the chain is on the cytoplasmic side. A helical membrane pass occupies residues 147 to 164 (AVATAVLWVLAALLAMPV). Residues 165–198 (MVLRTTGDLENTTKVQCYMDYSMVATVSSEWAWE) lie on the Extracellular side of the membrane. N175 carries N-linked (GlcNAc...) asparagine glycosylation. The helical transmembrane segment at 199 to 223 (VGLGVSSTTVGFVVPFTIMLTCYFF) threads the bilayer. The Cytoplasmic segment spans residues 224-246 (IAQTIAGHFRKERIEGLRKRRRL). A helical transmembrane segment spans residues 247 to 270 (LSIIVVLVVTFALCWMPYHLVKTL). The Extracellular portion of the chain corresponds to 271-289 (YMLGSLLHWPCDFDLFLMN). The helical transmembrane segment at 290 to 312 (IFPYCTCISYVNSCLNPFLYAFF) threads the bilayer. Topologically, residues 313 to 380 (DPRFRQACTS…PYSQETLVVD (68 aa)) are cytoplasmic. Over residues 342 to 351 (KSASYSSGHS) the composition is skewed to low complexity. Residues 342–380 (KSASYSSGHSQGPGPNMGKGGEQMHEKSIPYSQETLVVD) form a disordered region. Residues 371–380 (PYSQETLVVD) show a composition bias toward polar residues.

It belongs to the G-protein coupled receptor 1 family. Homodimer; dimerization inhibits APLNR-mediated G protein and beta-arrestin signaling pathways compared to monomeric APLNR. As to expression, expressed in heart, brain, kidney, stomach, spleen, thymus, lung, ovary, small intestine and colon, adipose tissues and pancreas. Expressed in glial cells, astrocytes and neuronal subpopulations. Expressed in embryonic (ESCs) and induced (iPSCs) pluripotent stem cells.

The protein resides in the cell membrane. In terms of biological role, g protein-coupled receptor for peptide hormones apelin (APLN) and apelin receptor early endogenous ligand (APELA/ELA), that plays a role in the regulation of normal cardiovascular function and fluid homeostasis. When acting as apelin receptor, activates both G(i) protein pathway that inhibits adenylate cyclase activity, and the beta-arrestin pathway that promotes internalization of the receptor. APLNR/APJ also functions as mechanoreceptor that is activated by pathological stimuli in a G-protein-independent fashion to induce beta-arrestin signaling, hence eliciting cardiac hypertrophy. However, the presence of apelin ligand blunts cardiac hypertrophic induction from APLNR/APJ on response to pathological stimuli. Plays a key role in early development such as gastrulation, blood vessels formation and heart morphogenesis by acting as a APELA receptor. May promote angioblast migration toward the embryonic midline, i.e. the position of the future vessel formation, during vasculogenesis. Promotes sinus venosus (SV)-derived endothelial cells migration into the developing heart to promote coronary blood vessel development. Also plays a role in various processes in adults such as regulation of blood vessel formation, blood pressure, heart contractility and heart failure. Its function is as follows. (Microbial infection) Alternative coreceptor with CD4 for HIV-1 infection; may be involved in the development of AIDS dementia. The chain is Apelin receptor from Homo sapiens (Human).